We begin with the raw amino-acid sequence, 340 residues long: MKITYVGLIKVCFLVFLLLCATVLLNISWRQRDSSQSLQHCNSTCSAKYLETKLKEAHLTGRHKKWETYRLDAKPTSATGQGHQHFAKEPLQIKDLFIAVKTTKKYHGNRLNLLMQTWISRAKEQTFIFTDWEDQELRQKAGDQMVNTNCSAVHTRQALCCKMAVEYDKFVLSDKKWFCHLDDDNYLNLHALLDLLSTFSHSTDVYVGRPSLDHPVETVDRMKGDGSGSLKFWFATGGAGFCISRGLALKMSPWASMGNFISTAEKVRLPDDCTIGYIIEGMLDVKMQHSNLFHSHLEHLQRLPTESLLKQVTLSYGGPDNKWNVVRVNGAFSLAEDPTR.

Residues 1-4 lie on the Cytoplasmic side of the membrane; sequence MKIT. Residues 5–25 form a helical; Signal-anchor for type II membrane protein membrane-spanning segment; sequence YVGLIKVCFLVFLLLCATVLL. Topologically, residues 26–340 are lumenal; it reads NISWRQRDSS…AFSLAEDPTR (315 aa). Asn-42 carries an N-linked (GlcNAc...) asparagine glycan. A substrate-binding site is contributed by Arg-110. Asn-149 carries N-linked (GlcNAc...) asparagine glycosylation. Cystine bridges form between Cys-150–Cys-161 and Cys-179–Cys-242. Asp-183 lines the substrate pocket. Mn(2+) is bound at residue Asp-184. The active site involves Asp-272. His-296 contacts Mn(2+).

This sequence belongs to the glycosyltransferase 31 family. It depends on Mn(2+) as a cofactor.

The protein localises to the golgi apparatus membrane. The catalysed reaction is 3-O-(alpha-L-fucosyl)-L-threonyl-[EGF-like domain protein] + UDP-N-acetyl-alpha-D-glucosamine = 3-O-(N-acetyl-beta-D-glucosaminyl-(1-&gt;3)-alpha-L-fucosyl)-L-threonyl-[EGF-like domain protein] + UDP + H(+). It carries out the reaction 3-O-(alpha-L-fucosyl)-L-seryl-[EGF-like domain protein] + UDP-N-acetyl-alpha-D-glucosamine = 3-O-(N-acetyl-beta-D-glucosaminyl-(1-&gt;3)-alpha-L-fucosyl)-L-seryl-[EGF-like domain protein] + UDP + H(+). Functionally, glycosyltransferase that initiates the elongation of O-linked fucose residues attached to EGF-like repeats in the extracellular domain of Notch molecules. The chain is Beta-1,3-N-acetylglucosaminyltransferase radical fringe (rfng) from Xenopus laevis (African clawed frog).